The chain runs to 385 residues: 1-deoxy-D-xylulose 5-phosphate reductoisomerase (385 aa).

Residues T11, G12, S13, I14, A37, R38, N39, and N123 each coordinate NADPH. K124 contacts 1-deoxy-D-xylulose 5-phosphate. E125 lines the NADPH pocket. D149 lines the Mn(2+) pocket. 1-deoxy-D-xylulose 5-phosphate is bound by residues S150, E151, S173, and H196. E151 contacts Mn(2+). Position 202 (G202) interacts with NADPH. 4 residues coordinate 1-deoxy-D-xylulose 5-phosphate: S209, N214, K215, and E218. E218 contributes to the Mn(2+) binding site.

This sequence belongs to the DXR family. The cofactor is Mg(2+). Mn(2+) is required as a cofactor.

The catalysed reaction is 2-C-methyl-D-erythritol 4-phosphate + NADP(+) = 1-deoxy-D-xylulose 5-phosphate + NADPH + H(+). Its pathway is isoprenoid biosynthesis; isopentenyl diphosphate biosynthesis via DXP pathway; isopentenyl diphosphate from 1-deoxy-D-xylulose 5-phosphate: step 1/6. Its function is as follows. Catalyzes the NADPH-dependent rearrangement and reduction of 1-deoxy-D-xylulose-5-phosphate (DXP) to 2-C-methyl-D-erythritol 4-phosphate (MEP). This is 1-deoxy-D-xylulose 5-phosphate reductoisomerase from Moorella thermoacetica (strain ATCC 39073 / JCM 9320).